Consider the following 363-residue polypeptide: Phosphoserine aminotransferase (363 aa).

Arg42 serves as a coordination point for L-glutamate. Residues 76-77, Trp102, Thr156, Asp175, and Gln198 each bind pyridoxal 5'-phosphate; that span reads GR. N6-(pyridoxal phosphate)lysine is present on Lys199. Residue 240–241 coordinates pyridoxal 5'-phosphate; the sequence is NT.

This sequence belongs to the class-V pyridoxal-phosphate-dependent aminotransferase family. SerC subfamily. In terms of assembly, homodimer. Pyridoxal 5'-phosphate is required as a cofactor.

The protein resides in the cytoplasm. The catalysed reaction is O-phospho-L-serine + 2-oxoglutarate = 3-phosphooxypyruvate + L-glutamate. It carries out the reaction 4-(phosphooxy)-L-threonine + 2-oxoglutarate = (R)-3-hydroxy-2-oxo-4-phosphooxybutanoate + L-glutamate. It participates in amino-acid biosynthesis; L-serine biosynthesis; L-serine from 3-phospho-D-glycerate: step 2/3. It functions in the pathway cofactor biosynthesis; pyridoxine 5'-phosphate biosynthesis; pyridoxine 5'-phosphate from D-erythrose 4-phosphate: step 3/5. Its function is as follows. Catalyzes the reversible conversion of 3-phosphohydroxypyruvate to phosphoserine and of 3-hydroxy-2-oxo-4-phosphonooxybutanoate to phosphohydroxythreonine. This Shewanella sp. (strain W3-18-1) protein is Phosphoserine aminotransferase.